Here is a 90-residue protein sequence, read N- to C-terminus: Large ribosomal subunit protein uL16c (90 aa).

The protein belongs to the universal ribosomal protein uL16 family. As to quaternary structure, part of the 50S ribosomal subunit.

It localises to the plastid. The protein localises to the chloroplast. The sequence is that of Large ribosomal subunit protein uL16c (rpl16) from Oenothera ammophila (Evening primerose).